We begin with the raw amino-acid sequence, 692 residues long: Eomesodermin (692 aa).

A disordered region spans residues 35–135; sequence NSSTPNLPHT…LNTAVPTSAP (101 aa). A DNA-binding region (T-box) is located at residues 263–443; sequence LWLKFHRHQT…HNPFAKGFRD (181 aa). The segment at 578-692 is required for transcription activation; sequence SMAGWGSRGS…LGYYSFYSSS (115 aa). Disordered stretches follow at residues 595–614 and 621–673; these read TSLP…DLLP and EMSS…DIGT. Low complexity-rich tracts occupy residues 596 to 609 and 654 to 665; these read SLPW…SGFS and SPSTSSNENSPP.

The protein resides in the nucleus. Functionally, functions as a transcriptional activator playing a crucial role during development. Functions in gastrulation, regulating mesoderm differentiation. Activates wnt8, t/bra, chrd and mix-A/mix.1 expression. The sequence is that of Eomesodermin (eomes) from Xenopus laevis (African clawed frog).